The sequence spans 204 residues: MDDNGLDTLGQTIVGALPGIATGHSVGFGQLTLTVDAGKIVEVMRLLRDDPRFRFISFIDMTAVDYPGRAERFEIVYHLLSPKLNERVRVKAEVGETTLVPSIIEVFPGADWFEREAYDLYGIVITGHPDMRRLLTDYGFDGHPLRKDFPLTGFVEVRYDDDQKRVIYEPVRLNQEFRKFDFLSPWEGADYPVLPGDEKAGVKS.

Belongs to the complex I 30 kDa subunit family. As to quaternary structure, NDH-1 is composed of 14 different subunits. Subunits NuoB, C, D, E, F, and G constitute the peripheral sector of the complex.

It is found in the cell inner membrane. It carries out the reaction a quinone + NADH + 5 H(+)(in) = a quinol + NAD(+) + 4 H(+)(out). Functionally, NDH-1 shuttles electrons from NADH, via FMN and iron-sulfur (Fe-S) centers, to quinones in the respiratory chain. The immediate electron acceptor for the enzyme in this species is believed to be ubiquinone. Couples the redox reaction to proton translocation (for every two electrons transferred, four hydrogen ions are translocated across the cytoplasmic membrane), and thus conserves the redox energy in a proton gradient. This chain is NADH-quinone oxidoreductase subunit C, found in Rhodopseudomonas palustris (strain ATCC BAA-98 / CGA009).